Consider the following 1088-residue polypeptide: DNA damage-binding protein 1a (1088 aa).

Belongs to the DDB1 family. Component of the CDD complex, at least composed of COP10, DET1 and DDB1A. Component of the CUL4-RBX1-CDD complex. Component of the CUL4-RBX1-DDB1-PRL1 E3 ubiquitin-protein ligase complex. Component of the UV-DDB complex, which is composed of DDB1A and DDB2. Interacts with RAE1. Interacts with WDR55. Interacts with ATCSA-1. Interacts with DDA1. Binds to ASG2; the subcellular localization of this complex depends on ASG2 farnesylation status. Binds to KTN80.2/DWA3. Interacts with HTD1. Interacts directly with DHU1.

It localises to the cytoplasm. The protein resides in the nucleus. The protein operates within protein modification; protein ubiquitination. In terms of biological role, component of light signal transduction machinery. Involved in repression of photomorphogenesis in darkness by participating in the CDD complex, a complex probably required to regulate the activity of ubiquitin conjugating enzymes (E2s). Repression of photomorphogenesis is probably mediated by ubiquitination and subsequent degradation of photomorphogenesis-promoting factors such as HY5, HYH and LAF1. Plays a role in DNA repair by forming with DDB2 the UV-damaged DNA-binding protein complex (UV-DDB). Component of the CUL4-RBX1-DDB1-PRL1 E3 ubiquitin-protein ligase complex. The protein is DNA damage-binding protein 1a of Arabidopsis thaliana (Mouse-ear cress).